A 250-amino-acid chain; its full sequence is uncharacterized protein (250 aa).

This is an uncharacterized protein from Rickettsia prowazekii (strain Madrid E).